The following is a 2035-amino-acid chain: Proline-rich protein 12 (2035 aa).

Disordered stretches follow at residues 210–280 (GGGV…ERAL), 292–311 (RPAS…LQHY), 329–584 (CSPL…GAPG), and 645–685 (QAPS…GTPY). Residues 223–240 (QTPPYRPGPPDPPPPPRH) show a composition bias toward pro residues. Low complexity predominate over residues 249 to 261 (ASSSAATAAEPSS). Residues 296 to 305 (AQPPPPPPPA) are compositionally biased toward pro residues. Serine 330 and serine 338 each carry phosphoserine. Residues 338–364 (SPGAGEPSKGGPSGATAGAAGRATGPE) are compositionally biased toward low complexity. The segment covering 365–377 (TAGGGAAGGGGGY) has biased composition (gly residues). 2 stretches are compositionally biased toward low complexity: residues 408 to 429 (STAT…AGKA) and 437 to 455 (SQAY…QAYG). Over residues 476–487 (PPQPPSGPPPPG) the composition is skewed to pro residues. 2 stretches are compositionally biased toward polar residues: residues 490–501 (TCQSYSPDQLQG) and 520–534 (GLPT…STGH). Positions 540–555 (GHGGGWGPSSLGGGGE) are enriched in gly residues. Phosphoserine is present on serine 648. The segment covering 670–681 (GLGGSGGAGGAP) has biased composition (gly residues). The residue at position 735 (threonine 735) is a Phosphothreonine. Disordered regions lie at residues 755–844 (AFLQ…PLQL), 851–870 (HGLE…SLEP), 879–920 (GALE…APRF), and 946–1061 (EMFG…CSTK). Positions 830–841 (PQPPPPPPPPMP) are enriched in pro residues. The residue at position 859 (serine 859) is a Phosphoserine. Positions 1031–1046 (SAPPPPPPPPPPPPVS) are enriched in pro residues. Residues serine 1070 and serine 1128 each carry the phosphoserine modification. Disordered regions lie at residues 1112 to 1244 (RRLP…DHNS), 1288 to 1355 (PLYQ…SPCK), 1367 to 1567 (TLPS…GEGI), and 1662 to 1839 (HRPP…PGRL). Positions 1190–1199 (KPRGRGRGRG) are enriched in basic residues. Positions 1200-1214 (RKAEEMGGTRLEPLK) are enriched in basic and acidic residues. Lysine 1214 carries the post-translational modification N6-acetyllysine. At threonine 1295 the chain carries Phosphothreonine. Serine 1299 bears the Phosphoserine mark. Residues 1314–1329 (QPPPPTVPTVPHPAPS) are compositionally biased toward pro residues. Serine 1372, serine 1373, and serine 1378 each carry phosphoserine. A compositionally biased stretch (pro residues) spans 1449-1529 (PPTPPPAPTP…PPEEPPAPSP (81 aa)). Residues 1535–1547 (PDARPLHLAKKQE) show a composition bias toward basic and acidic residues. At threonine 1555 the chain carries Phosphothreonine. Serine 1562 bears the Phosphoserine mark. The span at 1698–1709 (ETPEKMTSEKPP) shows a compositional bias: basic and acidic residues. The residue at position 1699 (threonine 1699) is a Phosphothreonine. The segment covering 1710–1730 (EPAPEPAVPEPPAPEKPSPPR) has biased composition (pro residues). A compositionally biased stretch (basic and acidic residues) spans 1731-1768 (PVEKEKEKEKEKEKEKERVTRPLRSERATSGRQMRTDR). A compositionally biased stretch (polar residues) spans 1769–1779 (SLATGQSTTSR). Residues 1817 to 1828 (SSSDSESSPGAP) show a composition bias toward low complexity. Serine 1924 bears the Phosphoserine mark.

In terms of tissue distribution, expressed in brain.

It is found in the nucleus. It localises to the postsynaptic density. Its subcellular location is the synapse. The protein localises to the synaptosome. This chain is Proline-rich protein 12, found in Mus musculus (Mouse).